The chain runs to 792 residues: Phenylalanine--tRNA ligase beta subunit (792 aa).

Residues 39–150 enclose the tRNA-binding domain; that stretch reads GDEITNVVTG…ENTPIGKDIK (112 aa). The B5 domain maps to 404 to 479; that stretch reads SEPNIVEVDY…RIYGYNKVPS (76 aa). Residues aspartate 457, aspartate 463, glutamate 466, and glutamate 467 each coordinate Mg(2+). The FDX-ACB domain occupies 699–792; it reads PKFPTVTRDI…LEHVLGAELR (94 aa).

It belongs to the phenylalanyl-tRNA synthetase beta subunit family. Type 1 subfamily. Tetramer of two alpha and two beta subunits. It depends on Mg(2+) as a cofactor.

It is found in the cytoplasm. It carries out the reaction tRNA(Phe) + L-phenylalanine + ATP = L-phenylalanyl-tRNA(Phe) + AMP + diphosphate + H(+). This Clostridium acetobutylicum (strain ATCC 824 / DSM 792 / JCM 1419 / IAM 19013 / LMG 5710 / NBRC 13948 / NRRL B-527 / VKM B-1787 / 2291 / W) protein is Phenylalanine--tRNA ligase beta subunit.